Consider the following 132-residue polypeptide: Small ribosomal subunit protein uS8 (132 aa).

It belongs to the universal ribosomal protein uS8 family. In terms of assembly, part of the 30S ribosomal subunit. Contacts proteins S5 and S12.

One of the primary rRNA binding proteins, it binds directly to 16S rRNA central domain where it helps coordinate assembly of the platform of the 30S subunit. The sequence is that of Small ribosomal subunit protein uS8 from Rickettsia bellii (strain OSU 85-389).